The sequence spans 85 residues: Small ribosomal subunit protein bS20 (85 aa).

Belongs to the bacterial ribosomal protein bS20 family.

In terms of biological role, binds directly to 16S ribosomal RNA. In Lactobacillus johnsonii (strain CNCM I-12250 / La1 / NCC 533), this protein is Small ribosomal subunit protein bS20.